The chain runs to 396 residues: Ribosomal RNA large subunit methyltransferase I (396 aa).

The PUA domain occupies 2–81; that stretch reads TVRLILAKGR…ESIDIDFFVR (80 aa).

The protein belongs to the methyltransferase superfamily. RlmI family.

The protein localises to the cytoplasm. The enzyme catalyses cytidine(1962) in 23S rRNA + S-adenosyl-L-methionine = 5-methylcytidine(1962) in 23S rRNA + S-adenosyl-L-homocysteine + H(+). Functionally, specifically methylates the cytosine at position 1962 (m5C1962) of 23S rRNA. This chain is Ribosomal RNA large subunit methyltransferase I, found in Erwinia tasmaniensis (strain DSM 17950 / CFBP 7177 / CIP 109463 / NCPPB 4357 / Et1/99).